We begin with the raw amino-acid sequence, 628 residues long: Chaperone protein HtpG (628 aa).

Residues 1–334 (MTTTDTASET…SEDLPLNLSR (334 aa)) form an a; substrate-binding region. Residues 335–550 (EMLQNNPQLA…GFGPDRELEK (216 aa)) form a b region. Residues 551-628 (MLARANKGAA…LVLRGLVAHG (78 aa)) form a c region.

This sequence belongs to the heat shock protein 90 family. Homodimer.

The protein localises to the cytoplasm. Its function is as follows. Molecular chaperone. Has ATPase activity. The chain is Chaperone protein HtpG from Rhodopseudomonas palustris (strain BisB5).